The primary structure comprises 116 residues: Iron-sulfur cluster insertion protein ErpA (116 aa).

Residues cysteine 44, cysteine 108, and cysteine 110 each coordinate iron-sulfur cluster.

The protein belongs to the HesB/IscA family. As to quaternary structure, homodimer. Iron-sulfur cluster is required as a cofactor.

Required for insertion of 4Fe-4S clusters for at least IspG. The sequence is that of Iron-sulfur cluster insertion protein ErpA from Shewanella putrefaciens (strain CN-32 / ATCC BAA-453).